The sequence spans 479 residues: Aspartyl/glutamyl-tRNA(Asn/Gln) amidotransferase subunit B (479 aa).

This sequence belongs to the GatB/GatE family. GatB subfamily. Heterotrimer of A, B and C subunits.

It carries out the reaction L-glutamyl-tRNA(Gln) + L-glutamine + ATP + H2O = L-glutaminyl-tRNA(Gln) + L-glutamate + ADP + phosphate + H(+). The enzyme catalyses L-aspartyl-tRNA(Asn) + L-glutamine + ATP + H2O = L-asparaginyl-tRNA(Asn) + L-glutamate + ADP + phosphate + 2 H(+). Functionally, allows the formation of correctly charged Asn-tRNA(Asn) or Gln-tRNA(Gln) through the transamidation of misacylated Asp-tRNA(Asn) or Glu-tRNA(Gln) in organisms which lack either or both of asparaginyl-tRNA or glutaminyl-tRNA synthetases. The reaction takes place in the presence of glutamine and ATP through an activated phospho-Asp-tRNA(Asn) or phospho-Glu-tRNA(Gln). This Streptococcus pyogenes serotype M4 (strain MGAS10750) protein is Aspartyl/glutamyl-tRNA(Asn/Gln) amidotransferase subunit B.